The following is a 1050-amino-acid chain: uncharacterized protein (1050 aa).

The Cytoplasmic segment spans residues 1 to 83; sequence MARLLTKSSQ…AVKLGTFEGC (83 aa). Residues Ser9 and Ser60 each carry the phosphoserine modification. Residue Thr64 is modified to Phosphothreonine. The chain crosses the membrane as a helical span at residues 84-104; that stretch reads FIPTTLNVLSILLYLRFPWII. The Extracellular portion of the chain corresponds to 105 to 112; sequence GEAGVLKT. A helical membrane pass occupies residues 113-133; that stretch reads LLMLFISYAVGIFTSLSISAI. Residues 134 to 146 lie on the Cytoplasmic side of the membrane; that stretch reads CTNGMVRGGGAYY. A helical membrane pass occupies residues 147 to 169; it reads AVSRSIGPELGGSIGLIFYVGQI. The Extracellular segment spans residues 170 to 202; the sequence is LNTGMNISGFVEPIISIFGKESGTISQFLPEGY. The N-linked (GlcNAc...) asparagine glycan is linked to Asn175. The chain crosses the membrane as a helical span at residues 203 to 223; it reads WWVFLYTTCVLAMCCILCCLG. The Cytoplasmic portion of the chain corresponds to 224–232; sequence SAIFAKASN. The chain crosses the membrane as a helical span at residues 233–253; the sequence is ALFVVIILSTISIPISSIFVH. Residues 254–295 lie on the Extracellular side of the membrane; that stretch reads PFKDPSLLVHFTGLKWSTLMKNLASAYTENEKGTGYESFKST. Ser270 carries the post-translational modification Phosphoserine. The residue at position 271 (Thr271) is a Phosphothreonine. The helical transmembrane segment at 296 to 316 threads the bilayer; sequence FGVFFPATAGLLAGASMSGDL. Topologically, residues 317–334 are cytoplasmic; sequence KAPSRSIPKGTISSQATT. The helical transmembrane segment at 335-355 threads the bilayer; that stretch reads FLLYLLVILCVGASVTRTGLL. Residues 356–368 are Extracellular-facing; the sequence is LDMDVMEHISLHP. A helical transmembrane segment spans residues 369 to 389; that stretch reads LFIISGILSSGAFSSFMGIFG. The Cytoplasmic portion of the chain corresponds to 390–417; that stretch reads AAKLLQAIARDDLIPGMFFFAKGSSYDD. The helical transmembrane segment at 418–438 threads the bilayer; it reads IPYVAIGVTYLITQISLFWDI. Over 439–442 the chain is Extracellular; sequence NMLS. A helical membrane pass occupies residues 443–463; the sequence is SMITMTFLLTFGFINLSCFLL. Residues 464-480 are Cytoplasmic-facing; that stretch reads RISSTPNFRPTFRYFNR. The chain crosses the membrane as a helical span at residues 481–497; sequence RTTLVGTILSFGVMFYV. At 498 to 499 the chain is on the extracellular side; it reads DR. Residues 500-520 form a helical membrane-spanning segment; it reads LNAFISFLIAGILVVVIYFTC. Residues 521–1050 lie on the Cytoplasmic side of the membrane; the sequence is PPKNWGDVSQ…SKSLTITTAL (530 aa). Ser901 bears the Phosphoserine mark. The segment at 915–943 is disordered; the sequence is ETESSFGNRSLSPKQENRRTYSDSTIESS. Polar residues predominate over residues 916–928; it reads TESSFGNRSLSPK. Ser936 is subject to Phosphoserine. The residue at position 939 (Thr939) is a Phosphothreonine.

The protein belongs to the SLC12A transporter family.

It is found in the membrane. This is an uncharacterized protein from Schizosaccharomyces pombe (strain 972 / ATCC 24843) (Fission yeast).